A 226-amino-acid polypeptide reads, in one-letter code: ATP synthase F(0) complex subunit a (226 aa).

Transmembrane regions (helical) follow at residues 9 to 29, 68 to 88, 97 to 117, 138 to 158, 164 to 184, and 201 to 223; these read FITP…FPAM, WALM…LGLV, QLSM…ITGF, IPML…ALAI, ITAG…LTSI, and ILEF…LYLH.

This sequence belongs to the ATPase A chain family. Component of the ATP synthase complex composed at least of ATP5F1A/subunit alpha, ATP5F1B/subunit beta, ATP5MC1/subunit c (homooctomer), MT-ATP6/subunit a, MT-ATP8/subunit 8, ATP5ME/subunit e, ATP5MF/subunit f, ATP5MG/subunit g, ATP5MK/subunit k, ATP5MJ/subunit j, ATP5F1C/subunit gamma, ATP5F1D/subunit delta, ATP5F1E/subunit epsilon, ATP5PF/subunit F6, ATP5PB/subunit b, ATP5PD/subunit d, ATP5PO/subunit OSCP. ATP synthase complex consists of a soluble F(1) head domain (subunits alpha(3) and beta(3)) - the catalytic core - and a membrane F(0) domain - the membrane proton channel (subunits c, a, 8, e, f, g, k and j). These two domains are linked by a central stalk (subunits gamma, delta, and epsilon) rotating inside the F1 region and a stationary peripheral stalk (subunits F6, b, d, and OSCP). Interacts with DNAJC30; interaction is direct.

It localises to the mitochondrion inner membrane. It carries out the reaction H(+)(in) = H(+)(out). Subunit a, of the mitochondrial membrane ATP synthase complex (F(1)F(0) ATP synthase or Complex V) that produces ATP from ADP in the presence of a proton gradient across the membrane which is generated by electron transport complexes of the respiratory chain. ATP synthase complex consist of a soluble F(1) head domain - the catalytic core - and a membrane F(1) domain - the membrane proton channel. These two domains are linked by a central stalk rotating inside the F(1) region and a stationary peripheral stalk. During catalysis, ATP synthesis in the catalytic domain of F(1) is coupled via a rotary mechanism of the central stalk subunits to proton translocation. With the subunit c (ATP5MC1), forms the proton-conducting channel in the F(0) domain, that contains two crucial half-channels (inlet and outlet) that facilitate proton movement from the mitochondrial intermembrane space (IMS) into the matrix. Protons are taken up via the inlet half-channel and released through the outlet half-channel, following a Grotthuss mechanism. The protein is ATP synthase F(0) complex subunit a of Dugong dugon (Dugong).